Here is a 25-residue protein sequence, read N- to C-terminus: U11-ctenitoxin-Co1b (25 aa).

2 disulfides stabilise this stretch: C4/C18 and C11/C22.

In terms of assembly, monomer. In terms of tissue distribution, expressed by the venom gland.

The protein localises to the secreted. Its function is as follows. Neurotoxin. This Ctenus ornatus (Brazilian spider) protein is U11-ctenitoxin-Co1b.